We begin with the raw amino-acid sequence, 491 residues long: Protein DETOXIFICATION 20 (491 aa).

12 helical membrane passes run 37–57 (LWVV…VSMV), 75–95 (ITFT…AGAL), 120–140 (IVLT…GPIL), 156–176 (LALW…CQMF), 185–205 (IISY…WLLV), 214–234 (GAMT…LLYV), 265–285 (GGML…TGNL), 296–316 (AICI…LAAV), 337–357 (LIAV…FLFL), 381–401 (LLAF…VAIG), 413–433 (LACY…VVGL), and 438–458 (VWIG…VMTL).

It belongs to the multi antimicrobial extrusion (MATE) (TC 2.A.66.1) family.

It is found in the membrane. This is Protein DETOXIFICATION 20 from Arabidopsis thaliana (Mouse-ear cress).